The following is a 386-amino-acid chain: Alkanesulfonate monooxygenase (386 aa).

Belongs to the SsuD family.

It catalyses the reaction an alkanesulfonate + FMNH2 + O2 = an aldehyde + FMN + sulfite + H2O + 2 H(+). Functionally, catalyzes the desulfonation of aliphatic sulfonates. The protein is Alkanesulfonate monooxygenase of Delftia acidovorans (strain DSM 14801 / SPH-1).